A 282-amino-acid chain; its full sequence is Endo-1,4-beta-xylanase B (282 aa).

The signal sequence occupies residues 1–39 (MGISSILLSALIAGGALALPAAEPVSFDIRDENITLARR). Residue Asn33 is glycosylated (N-linked (GlcNAc...) asparagine). Residues 40-219 (AEAINYNQDY…GSGSGQISLS (180 aa)) form the GH11 domain. Glu117 acts as the Nucleophile in catalysis. Glu206 acts as the Proton donor in catalysis. Positions 214–245 (GQISLSKGTGGGSTTTTPTGPTSTSTAPSSGG) are disordered. The span at 227-243 (TTTTPTGPTSTSTAPSS) shows a compositional bias: low complexity. Residues 246–282 (TGAAQWGQCGGIGWTGPTTCVAPYTCKYENAYYSQCQ) form the CBM1 domain.

This sequence belongs to the glycosyl hydrolase 11 (cellulase G) family.

The protein localises to the secreted. The enzyme catalyses Endohydrolysis of (1-&gt;4)-beta-D-xylosidic linkages in xylans.. It functions in the pathway glycan degradation; xylan degradation. Significantly inhibited by the wheat xylanase inhibiting protein I (XIP-I) and the proteinaceous endoxylanase Triticum aestivum xylanase inhibitors I (TAXI-I), but not TAXI-II. Endo-1,4-beta-xylanase involved in the hydrolysis of xylan, a major structural heterogeneous polysaccharide found in plant biomass representing the second most abundant polysaccharide in the biosphere, after cellulose. The sequence is that of Endo-1,4-beta-xylanase B (xynB) from Talaromyces funiculosus (Fruitlet core rot fungus).